Consider the following 208-residue polypeptide: Small ribosomal subunit protein uS4 (208 aa).

In terms of domain architecture, S4 RNA-binding spans 95–157 (RRIDNIVYRA…DSLKKLIRSN (63 aa)).

This sequence belongs to the universal ribosomal protein uS4 family. Part of the 30S ribosomal subunit. Contacts protein S5. The interaction surface between S4 and S5 is involved in control of translational fidelity.

One of the primary rRNA binding proteins, it binds directly to 16S rRNA where it nucleates assembly of the body of the 30S subunit. Its function is as follows. With S5 and S12 plays an important role in translational accuracy. The chain is Small ribosomal subunit protein uS4 from Borrelia garinii subsp. bavariensis (strain ATCC BAA-2496 / DSM 23469 / PBi) (Borreliella bavariensis).